The sequence spans 168 residues: Gremlin-2 (168 aa).

The N-terminal stretch at 1-21 is a signal peptide; sequence MFWKLSLSLFLVAVLVKVAEA. N40 carries an N-linked (GlcNAc...) asparagine glycan. Intrachain disulfides connect C73–C123, C87–C137, C97–C155, and C101–C157. A CTCK domain is found at 73–163; that stretch reads CKTQPLRQTV…QCRCMSVNLS (91 aa). N-linked (GlcNAc...) asparagine glycosylation occurs at N161.

This sequence belongs to the DAN family. Homodimer. Interacts with BMP2, BMP4 and BMP7, but has lower affinity for BMP7 than for BMP2 and BMP4. Binds heparin; this impairs the interaction with BMP2. Post-translationally, N-glycosylated.

It is found in the secreted. Cytokine that inhibits the activity of BMP2 and BMP4 in a dose-dependent manner, and thereby modulates signaling by BMP family members. Contributes to the regulation of embryonic morphogenesis via BMP family members. Antagonizes BMP4-induced suppression of progesterone production in granulosa cells. This chain is Gremlin-2 (GREM2), found in Homo sapiens (Human).